A 305-amino-acid polypeptide reads, in one-letter code: U6 small nuclear RNA (adenine-(43)-N(6))-methyltransferase (305 aa).

Positions 85, 110, 133, 164, and 186 each coordinate S-adenosyl-L-methionine. The tract at residues 194 to 217 (SPNPFGGNTRNPQRRPAPNNVRTG) is disordered.

Belongs to the methyltransferase superfamily. METTL16/RlmF family.

The enzyme catalyses adenosine in U6 snRNA + S-adenosyl-L-methionine = N(6)-methyladenosine in U6 snRNA + S-adenosyl-L-homocysteine + H(+). RNA N6-methyltransferase that mediates N6-methylation of adenine of U6 small nuclear RNA (U6 snRNA). The polypeptide is U6 small nuclear RNA (adenine-(43)-N(6))-methyltransferase (Drosophila pseudoobscura pseudoobscura (Fruit fly)).